A 217-amino-acid polypeptide reads, in one-letter code: Oxygen-evolving enhancer protein 3-1, chloroplastic (217 aa).

The transit peptide at 1-68 (MAQAMASMTG…GGALSQAARA (68 aa)) directs the protein to the chloroplast.

This sequence belongs to the PsbQ family.

It is found in the plastid. The protein localises to the chloroplast thylakoid membrane. The chain is Oxygen-evolving enhancer protein 3-1, chloroplastic (PSBQ1) from Zea mays (Maize).